The primary structure comprises 222 residues: 3-dehydroquinate dehydratase (222 aa).

3-dehydroquinate-binding positions include 32-34 and Arg64; that span reads ELR. His117 functions as the Proton donor/acceptor in the catalytic mechanism. Lys143 (schiff-base intermediate with substrate) is an active-site residue. Arg181 provides a ligand contact to 3-dehydroquinate.

It belongs to the type-I 3-dehydroquinase family. In terms of assembly, homodimer.

The catalysed reaction is 3-dehydroquinate = 3-dehydroshikimate + H2O. It functions in the pathway metabolic intermediate biosynthesis; chorismate biosynthesis; chorismate from D-erythrose 4-phosphate and phosphoenolpyruvate: step 3/7. Involved in the third step of the chorismate pathway, which leads to the biosynthesis of aromatic amino acids. Catalyzes the cis-dehydration of 3-dehydroquinate (DHQ) and introduces the first double bond of the aromatic ring to yield 3-dehydroshikimate. The chain is 3-dehydroquinate dehydratase from Aeropyrum pernix (strain ATCC 700893 / DSM 11879 / JCM 9820 / NBRC 100138 / K1).